The chain runs to 98 residues: NADH-ubiquinone oxidoreductase chain 4L (98 aa).

A run of 3 helical transmembrane segments spans residues 1 to 21 (MPYI…GTLM), 29 to 49 (SLLC…LLSL), and 61 to 81 (LILL…LIMI).

The protein belongs to the complex I subunit 4L family. As to quaternary structure, core subunit of respiratory chain NADH dehydrogenase (Complex I) which is composed of 45 different subunits.

It is found in the mitochondrion inner membrane. It catalyses the reaction a ubiquinone + NADH + 5 H(+)(in) = a ubiquinol + NAD(+) + 4 H(+)(out). Its function is as follows. Core subunit of the mitochondrial membrane respiratory chain NADH dehydrogenase (Complex I) which catalyzes electron transfer from NADH through the respiratory chain, using ubiquinone as an electron acceptor. Part of the enzyme membrane arm which is embedded in the lipid bilayer and involved in proton translocation. The chain is NADH-ubiquinone oxidoreductase chain 4L (MT-ND4L) from Mammuthus primigenius (Siberian woolly mammoth).